The chain runs to 952 residues: MTTVRLHLRRIMCNSSRAQTAQHTEEERKRTIISLQGGKSFGRATTNDVIFLDGTEHVELEPQFISRCHARVHHTNQDGVEEYLVEDISENGTYINDRRLSKDKREILKSGDTIKFGHKNGSQHVADQKYDHPDADFAFCVEMSTAGEPAYQLVEQIRDSRVKVFAGTACAKDIGPREPSTTNKVLQQEADSTNGGPEMENNRASSASSATPEDTQMPSTSQYFCSIPKKTPFRKEFDSPLHNYIYRTSRHSPLYRKKLAEQAQRMAVKNGTFVNDSGVIELLSHLLDINVAYENLVTKNEKLEIIGTFCEKNKGSFKVDELSRRKEELAVMMEEEEPQTIEIRELLVSLSEKAQDVQSNDFTISASSAFTVISTSGVLCPTASLANESEDSYIQHLKSINISSEKSRKIADELKTVRNSEVAPIENKPLSPEMMVVLHRLVKAKEHNNKVAHVYTGNYASTVSRVMEMVPITSQVAVITTAGTPKHTSKGSAETAPMEVDDERHSASSGSTENNYRRRTDSEESEILDVVGTDEPDKDEKGGTETETPTPSPEDHGRQTQNKIDKNVRMSSTPRIDAQSTPSAVVSALPTPMNSPLPRVTSSKSAQDVSTPSTTPNPVSRSPDPVALVKDSVSSESTVSGIVSLEKIGSPAAQSVASVLPSVSNTTSSTSASLTTSSVAEEEETSSKENTDQKRAVDDSSDESARLVKQIKALSATPSSTPAESSKRKQKDTSSRKMKQLDESSADSDSEDDGRSGDKSTKRRDKARRSTRIGKSTPAKKVGKKEKVVEDEDETDDVQEEEKVTPRGGRRKNMKRTASQSAIKERKTKDKDVEPEEAPKKKRGRKKATPTEEEEPPKTEPSKERCGVAKGHCISAKYEKRKNLQWVSCSICNQWFHVWCVRLDNVCYREDETFLCCGSHPSKEAKDALAGRVYARYQAMPNKKPIPQASEA.

One can recognise an FHA domain in the interval 39 to 100 (KSFGRATTND…NGTYINDRRL (62 aa)). Disordered regions lie at residues 174–220 (IGPR…MPST), 483–639 (GTPK…ESTV), and 652–866 (AAQS…KERC). Polar residues-rich tracts occupy residues 179 to 195 (PSTT…STNG) and 202 to 220 (NRAS…MPST). Over residues 523 to 537 (EESEILDVVGTDEPD) the composition is skewed to acidic residues. The span at 553-568 (PEDHGRQTQNKIDKNV) shows a compositional bias: basic and acidic residues. 2 stretches are compositionally biased toward polar residues: residues 569–584 (RMSS…TPSA) and 600–620 (VTSS…NPVS). Residues 662–679 (SVSNTTSSTSASLTTSSV) are compositionally biased toward low complexity. Residues 685 to 706 (TSSKENTDQKRAVDDSSDESAR) show a composition bias toward basic and acidic residues. Residues 715–724 (SATPSSTPAE) are compositionally biased toward low complexity. A compositionally biased stretch (basic and acidic residues) spans 725-742 (SSKRKQKDTSSRKMKQLD). The segment covering 761–772 (TKRRDKARRSTR) has biased composition (basic residues). Over residues 789 to 800 (VEDEDETDDVQE) the composition is skewed to acidic residues. Composition is skewed to basic and acidic residues over residues 823–832 (IKERKTKDKD) and 856–866 (PPKTEPSKERC).

The protein localises to the nucleus. Functionally, potential transcription factor that may play a role in the regulation of genes involved in cell cycle G1/S transition. May bind to regulatory elements of genes. The protein is Germ layers disorganized gldi-3 of Caenorhabditis elegans.